A 196-amino-acid chain; its full sequence is Rho-related protein racA (196 aa).

Ala-13, Gly-15, Lys-16, Thr-17, Cys-18, Tyr-32, Thr-35, Gly-60, Lys-116, Asp-118, and Ala-159 together coordinate GTP. Thr-17 serves as a coordination point for Mg(2+). 2 consecutive short sequence motifs (switch) follow at residues 26–37 and 57–75; these read NAFPNEYIPTVF and DTAG…YPQT. Thr-35 contacts Mg(2+). Cys-193 bears the Cysteine methyl ester mark. Cys-193 is lipidated: S-geranylgeranyl cysteine. Positions 194 to 196 are cleaved as a propeptide — removed in mature form; sequence LLF.

Belongs to the small GTPase superfamily. Rho family. Interacts (GTP-bound form) with PAK2 (via CRIB domain). Requires Mg(2+) as cofactor.

It localises to the cell membrane. It is found in the cytoplasm. The protein resides in the cytoskeleton. It catalyses the reaction GTP + H2O = GDP + phosphate + H(+). With respect to regulation, regulated by guanine nucleotide exchange factors (GEFs) which promote the exchange of bound GDP for free GTP, GTPase activating proteins (GAPs) which increase the GTP hydrolysis activity, and GDP dissociation inhibitors which inhibit the dissociation of the nucleotide from the GTPase. Its function is as follows. Small GTPase which cycles between active GTP-bound and inactive GDP-bound states. Involved in cytoskeleton remodeling. Plays a role in phagocytosis of bacteria and host erythrocytes. Involved in capping of surface receptors. May be involved in cytokinesis. This chain is Rho-related protein racA, found in Entamoeba histolytica (strain ATCC 30459 / HM-1:IMSS / ABRM).